Here is an 89-residue protein sequence, read N- to C-terminus: Class I hydrophobin D (89 aa).

An N-terminal signal peptide occupies residues 1 to 16 (MKFSLATIALAAAVVA). Disulfide bonds link cysteine 28-cysteine 68, cysteine 39-cysteine 60, cysteine 40-cysteine 52, and cysteine 69-cysteine 85. The N-linked (GlcNAc...) asparagine glycan is linked to asparagine 36.

It belongs to the fungal hydrophobin family.

It localises to the secreted. Its subcellular location is the cell wall. It is found in the vacuole. The protein resides in the cytoplasmic vesicle. Aerial growth, conidiation, and dispersal of filamentous fungi in the environment rely upon a capability of their secreting small amphipathic proteins called hydrophobins (HPBs) with low sequence identity. Class I can self-assemble into an outermost layer of rodlet bundles on aerial cell surfaces, conferring cellular hydrophobicity that supports fungal growth, development and dispersal; whereas Class II form highly ordered films at water-air interfaces through intermolecular interactions but contribute nothing to the rodlet structure. Hyd1D contributes to certain cell wall-related features, such as hydrophobicity but is not involved in cell wall-related events during fungal proliferation in host hemocoel. Does not contribute to conidial hydrophobicity. Involved in insect hemocoel colonization independent of cell hydrophobicity. This Beauveria bassiana (strain ARSEF 2860) (White muscardine disease fungus) protein is Class I hydrophobin D.